A 164-amino-acid chain; its full sequence is Phosphopantetheine adenylyltransferase (164 aa).

Threonine 9 contributes to the substrate binding site. ATP-binding positions include 9–10 (TF) and histidine 17. The substrate site is built by lysine 41, leucine 73, and arginine 87. Residues 88–90 (GLR), glutamate 98, and 123–129 (YMFISAT) each bind ATP.

This sequence belongs to the bacterial CoaD family. Homohexamer. Requires Mg(2+) as cofactor.

It is found in the cytoplasm. The catalysed reaction is (R)-4'-phosphopantetheine + ATP + H(+) = 3'-dephospho-CoA + diphosphate. It participates in cofactor biosynthesis; coenzyme A biosynthesis; CoA from (R)-pantothenate: step 4/5. Its function is as follows. Reversibly transfers an adenylyl group from ATP to 4'-phosphopantetheine, yielding dephospho-CoA (dPCoA) and pyrophosphate. The sequence is that of Phosphopantetheine adenylyltransferase from Nitrosomonas eutropha (strain DSM 101675 / C91 / Nm57).